The sequence spans 166 residues: Twist-related protein (166 aa).

Residues 1–18 (MMQEESSSPVSPVDSLSN) are compositionally biased toward low complexity. A disordered region spans residues 1–83 (MMQEESSSPV…RVMANVRERQ (83 aa)). Over residues 28–39 (SKRGCRKRRSAR) the composition is skewed to basic residues. The segment covering 57-75 (ASSTGSSPQSFEELQSQRV) has biased composition (polar residues). The bHLH domain maps to 72 to 123 (SQRVMANVRERQRTQSLNEAFSSLRKIIPTLPSDKLSKIQTLKLASRYIDFL).

As to quaternary structure, efficient DNA binding requires dimerization with another bHLH protein. Homodimer. As to expression, subset of mesodermal cells.

It is found in the nucleus. In terms of biological role, probable transcription factor, which may be involved, with other proteins, in establishing the pattern of cell type-specific gene expression in mesodermal cell subgroups. This Xenopus laevis (African clawed frog) protein is Twist-related protein (twist1).